The following is a 195-amino-acid chain: Rubrerythrin-1 (195 aa).

The 148-residue stretch at 3–150 (SLKGTKTAEN…ALLKNIEENK (148 aa)) folds into the Ferritin-like diiron domain. Residues E20, E53, E98, E101, E132, H135, C162, C165, C178, and C181 each coordinate Fe(3+). One can recognise a Rubredoxin-like domain in the interval 157–191 (VKFWKCIKCGYIFEGKTAPKVCPACLHPQAYFEIL).

As to quaternary structure, homodimer. It depends on Fe(3+) as a cofactor.

The catalysed reaction is H2O2 + NADH + H(+) = NAD(+) + 2 H2O. Its activity is regulated as follows. Rubredoxin (Rd) increases the NADH consumption rate by serving as an intermediary electron-transfer shuttle between NROR and RubY. In terms of biological role, functions as the terminal component of an NADH peroxidase (NADH:H(2)O(2) oxidoreductase) when using NADH:rubredoxin oxidoreductase (NROR) as the electron transport intermediary from NADH to RubY. The protein is Rubrerythrin-1 (rbr1) of Clostridium acetobutylicum (strain ATCC 824 / DSM 792 / JCM 1419 / IAM 19013 / LMG 5710 / NBRC 13948 / NRRL B-527 / VKM B-1787 / 2291 / W).